The chain runs to 90 residues: MNITDVRIRKISAEGKMKAIVSVTFENQFVVHDIKVIEGQNGLFIAMPSRKTPDGEFKDIAHPINTETREQIQKAILDEYEKVKNLDVQE.

This sequence belongs to the SpoVG family.

In terms of biological role, could be involved in septation. This is Putative septation protein SpoVG from Clostridium perfringens (strain ATCC 13124 / DSM 756 / JCM 1290 / NCIMB 6125 / NCTC 8237 / Type A).